The following is an 87-amino-acid chain: Sec-independent protein translocase protein TatA (87 aa).

The chain crosses the membrane as a helical span at residues 1 to 21 (MGGISIWQLLIIALIIVLLFG). The tract at residues 54–87 (NTEADADFEQKTLSKEEQQSEDPVQKSQKDKEQV) is disordered.

Belongs to the TatA/E family. In terms of assembly, the Tat system comprises two distinct complexes: a TatABC complex, containing multiple copies of TatA, TatB and TatC subunits, and a separate TatA complex, containing only TatA subunits. Substrates initially bind to the TatABC complex, which probably triggers association of the separate TatA complex to form the active translocon.

The protein resides in the cell inner membrane. In terms of biological role, part of the twin-arginine translocation (Tat) system that transports large folded proteins containing a characteristic twin-arginine motif in their signal peptide across membranes. TatA could form the protein-conducting channel of the Tat system. In Photobacterium profundum (strain SS9), this protein is Sec-independent protein translocase protein TatA.